Reading from the N-terminus, the 667-residue chain is MDSRNMLVVYSVNLEKKLNAAAHHTIEYQTQKLVLRRGQIFSLKVMLNRPLQSHDELKLIFNTGHNMPFYTVELDPMTSYRSKGWQVKIAKQSGVEVVLNVISAADAVVGRYTMNVNEFDAGVFFLLFNPWCSDDSVFMASEEDRAEYVLNDTGYMYMGFAKQIKEKPWTFGQFEKYILNCCFRLLTHLEPKEMQSPVLVSRAICTMMCAANNFGVLVGNWTGDYSNGTAPYVWASSVPILQQHYITRMPVRFGQCWVFSGVLTTALRAVGIPARSVTNFESAHDTEKNLRVDIYLDESGKTIPHLTKDSVWNFHMWTDAWMKRQDLPQGHDGWQVLDSTPQEISEGQFRIGPSPVSAIRQGLVQIMYDTTFVFTEVNGDKYIWLVKQNQEREKNVLIAVETASIGKNISTKMVGENRRQDITLHYKFPEGSPEERKAMEKASGKRPDDKLNSRTLHISVLQNSVELGHPINLTIVLKRKTATPQNVNISCSLDLQTYTGNKKTNLGVIQKTVQIQGQESEVSLSMDSSFYIYKLGMVDDEMVIKGFIIAEIVDSGERVATDTTLCFLYSAFSVEMPSTSKVNQPLTITCNFKNTLPIPLTNIKFSVESLGLNNMKSWEQETVPPGKTINFQIECTPVKTGPRKFIVKFISRQVKEVHAEKVVLITK.

3 N-linked (GlcNAc...) asparagine glycosylation sites follow: asparagine 151, asparagine 220, and asparagine 227. Active-site residues include cysteine 256, histidine 315, and aspartate 338. Ca(2+) is bound by residues asparagine 378 and aspartate 380. An N-linked (GlcNAc...) asparagine glycan is attached at asparagine 408. Positions 430 and 435 each coordinate Ca(2+). Residues 430 to 449 (EGSPEERKAMEKASGKRPDD) are disordered. 2 N-linked (GlcNAc...) asparagine glycosylation sites follow: asparagine 472 and asparagine 488.

It belongs to the transglutaminase superfamily. Transglutaminase family. In terms of assembly, homodimer. The cofactor is Ca(2+). Post-translationally, the N-terminus is blocked. In terms of processing, probably linked to the cell membrane via a lipid-anchor, possibly a GPI-anchor. N-glycosylated on 2 Asn residues by a high mannose oligosaccharide consisting of five mannose residues and a fucosylated biantennary complex glycan. In terms of tissue distribution, expressed in the coagulating gland, the dorsal part of the prostate and in semen (at protein level). Expressed at low levels in the lateral prostate and seminal vesicle. Not expressed in the epididymis, kidney, liver, serum, sperm plug, testes and ventral prostate.

It localises to the secreted. Its subcellular location is the cell membrane. The enzyme catalyses L-glutaminyl-[protein] + L-lysyl-[protein] = [protein]-L-lysyl-N(6)-5-L-glutamyl-[protein] + NH4(+). Associated with the mammalian reproductive process. Plays an important role in the formation of the seminal coagulum through the cross-linking of specific proteins present in the seminal plasma. Transglutaminase is also required to stabilize the copulatory plug. The sequence is that of Protein-glutamine gamma-glutamyltransferase 4 (Tgm4) from Rattus norvegicus (Rat).